Here is a 417-residue protein sequence, read N- to C-terminus: 3-oxo-isoapionate-4-phosphate decarboxylase (417 aa).

Lys-177, Asp-179, and Glu-180 together coordinate Mg(2+). Lys-177 carries the post-translational modification N6-carboxylysine.

Belongs to the RuBisCO large chain family. Mg(2+) is required as a cofactor.

The catalysed reaction is 3-oxoisoapionate 4-phosphate + H(+) = L-erythrulose 1-phosphate + CO2. It participates in carbohydrate metabolism. Its function is as follows. Involved in catabolism of D-apiose. Catalyzes the decarboxylation of 3-oxo-isoapionate 4-phosphate to L-erythrulose 1-phosphate. This chain is 3-oxo-isoapionate-4-phosphate decarboxylase, found in Rhizobium etli (strain ATCC 51251 / DSM 11541 / JCM 21823 / NBRC 15573 / CFN 42).